The following is a 529-amino-acid chain: Putative inorganic phosphate cotransporter (529 aa).

8 consecutive transmembrane segments (helical) span residues 37 to 57 (FATR…AYVM), 110 to 130 (YILS…GILA), 148 to 168 (VFAF…LCAV), 202 to 222 (AVYA…GLLA), 232 to 252 (SIFY…LIFV), 338 to 358 (LPYL…DWMI), 429 to 449 (FLMS…PIAA), and 466 to 486 (IVFF…NIFG). The disordered stretch occupies residues 495-529 (NPEDDEQKPALQTTVTTSPARLSNGSTAPAAISSS). Over residues 504 to 529 (ALQTTVTTSPARLSNGSTAPAAISSS) the composition is skewed to polar residues.

It belongs to the major facilitator superfamily. Sodium/anion cotransporter family.

It localises to the membrane. In terms of biological role, may be an inorganic phosphate cotransporter. The chain is Putative inorganic phosphate cotransporter (Picot) from Drosophila melanogaster (Fruit fly).